The primary structure comprises 614 residues: MRNGEYSRSHGRSVRTVHPFLLGVSVYQYPVCRTTVNGSYAQSFAALLFFPQIAVAFSATAPAPSFDSFLSARQRHPPASSFLASPAAPTHPLFATARTTAAQLLSTPPAPARPRPRPDHVIPKEKWRLAVADFTFHGIPKIFQRYVRPARELLFIELKKLPLRHFLSEAEQRERAALPHEEAYHARLKERAHLQRARDFVSLHPVSDHARRLRTAAFEKQIKEKEQEIERARVEVRTARARFFRPWLQAEVLVLGAQNEPHALPERFHLATHLRQKKLSALVTGKLVDVAGYVRISLYLSTGLEAEPTREFTLAGPYRELPRLMHTLSAQLRSAIENAQPVRIVFDVHPPHARLSFQGVPVEDLSKPLISYPGRYVVDVSAAGYFSATKEIYIENRPAFSLRVRLVARPQHRVRVQLTDNSAAPIFSGARSVGVTPFSTVVTDLREIFTVGPAGARSFAFIERGTFPNSQPSTLVLPAPNPNATQDLAYKRDVAYWSFGALCIAVPIALILGSTLADTHQALERAKAASAQPPPPPAPAGTGALERKSQHLLIGTGVAVGVAVILSINFIVHAARYLNAVMHNAPQAVRPRADKDIQTLTHRDEAEEDQEEDS.

The next 2 helical transmembrane spans lie at 494–516 and 552–574; these read VAYWSFGALCIAVPIALILGSTL and LLIGTGVAVGVAVILSINFIVHA. The interval 588 to 614 is disordered; sequence AVRPRADKDIQTLTHRDEAEEDQEEDS. Positions 591-605 are enriched in basic and acidic residues; it reads PRADKDIQTLTHRDE.

It is found in the cell membrane. This is an uncharacterized protein from Treponema pallidum (strain Nichols).